A 662-amino-acid chain; its full sequence is Biosynthetic arginine decarboxylase (662 aa).

N6-(pyridoxal phosphate)lysine is present on lysine 127. 307–317 is a substrate binding site; it reads FDVGGGLGVDY.

This sequence belongs to the Orn/Lys/Arg decarboxylase class-II family. SpeA subfamily. Homotetramer. The cofactor is Mg(2+). It depends on pyridoxal 5'-phosphate as a cofactor.

The protein localises to the periplasm. It carries out the reaction L-arginine + H(+) = agmatine + CO2. It functions in the pathway amine and polyamine biosynthesis; agmatine biosynthesis; agmatine from L-arginine: step 1/1. Functionally, catalyzes the biosynthesis of agmatine from arginine. This chain is Biosynthetic arginine decarboxylase, found in Shigella flexneri.